We begin with the raw amino-acid sequence, 1049 residues long: Desmoglein-1 (1049 aa).

An N-terminal signal peptide occupies residues 1–23; it reads MDWSFFRVVAMLFIFLVVVEVNS. The propeptide occupies 24–49; it reads EFRIQVRDYNTKNGTIKWHSIRRQKR. Residues Asn-36, Asn-110, and Asn-180 are each glycosylated (N-linked (GlcNAc...) asparagine). 4 consecutive Cadherin domains span residues 50–158, 159–270, 271–385, and 386–497; these read EWIK…PVFS, MATF…PYME, QSSY…GPVF, and RPGS…TEPN. Topologically, residues 50–548 are extracellular; the sequence is EWIKFAAACR…LLSDNVHFGP (499 aa). Positions 485-534 are disordered; that stretch reads SFGNDDRTNTEPNTKITTNTGRQESTSSTNYDTSTTSTDSSQVYSSEPGN. Residues 494–508 show a composition bias toward polar residues; sequence TEPNTKITTNTGRQE. Residues 509–530 show a composition bias toward low complexity; sequence STSSTNYDTSTTSTDSSQVYSS. A helical transmembrane segment spans residues 549–569; that stretch reads AGIGLLIMGFLVLGLVPFLMI. Over 570 to 1049 the chain is Cytoplasmic; it reads CCDCGGAPRS…TKYSTVQYSK (480 aa). Ser-579 is subject to Phosphoserine. 5 Desmoglein repeat repeats span residues 813–839, 840–869, 870–899, 900–927, and 928–956; these read TYPS…TVTE, SYTT…ERVV, GPIS…ERVI, APSS…ERVI, and QPTS…ERVV. A disordered region spans residues 1014 to 1035; that stretch reads HMRSSSDHHFNQTIGSASPSTA. Polar residues predominate over residues 1024 to 1035; that stretch reads NQTIGSASPSTA.

As to quaternary structure, binds to JUP/plakoglobin. Interacts with PKP2. Interacts with DSC3; there is evidence to suggest that the interaction promotes cell-cell adhesion of keratinocytes. (Microbial infection) Interacts with Staphylococcus aureus protein SdrD; this interaction increases S.aureus adherence to keratinocytes. Expressed in all suprabasal layers of the epidermis, with the highest expression seen in the granular layer (at protein level).

Its subcellular location is the cell membrane. The protein resides in the cell junction. The protein localises to the desmosome. It localises to the cytoplasm. It is found in the nucleus. Functionally, component of intercellular desmosome junctions. Involved in the interaction of plaque proteins and intermediate filaments mediating cell-cell adhesion. This chain is Desmoglein-1 (DSG1), found in Homo sapiens (Human).